The chain runs to 99 residues: Protein RnfH (99 aa).

The protein belongs to the UPF0125 (RnfH) family.

This chain is Protein RnfH, found in Tolumonas auensis (strain DSM 9187 / NBRC 110442 / TA 4).